The primary structure comprises 113 residues: Photosystem II reaction center Psb28 protein (113 aa).

Belongs to the Psb28 family. As to quaternary structure, part of the photosystem II complex.

The protein resides in the cellular thylakoid membrane. The protein is Photosystem II reaction center Psb28 protein of Trichodesmium erythraeum (strain IMS101).